A 245-amino-acid chain; its full sequence is Orotidine 5'-phosphate decarboxylase (245 aa).

Residues Asp22, Lys44, 71–80 (DLKFHDIPNT), Thr131, Arg192, Gln201, Gly221, and Arg222 contribute to the substrate site. Lys73 acts as the Proton donor in catalysis.

Belongs to the OMP decarboxylase family. Type 1 subfamily. Homodimer.

It carries out the reaction orotidine 5'-phosphate + H(+) = UMP + CO2. It functions in the pathway pyrimidine metabolism; UMP biosynthesis via de novo pathway; UMP from orotate: step 2/2. In terms of biological role, catalyzes the decarboxylation of orotidine 5'-monophosphate (OMP) to uridine 5'-monophosphate (UMP). In Escherichia coli (strain 55989 / EAEC), this protein is Orotidine 5'-phosphate decarboxylase.